A 262-amino-acid chain; its full sequence is Protein BcsX (262 aa).

It functions in the pathway glycan metabolism; bacterial cellulose biosynthesis. This is Protein BcsX (bcsX) from Komagataeibacter xylinus (Gluconacetobacter xylinus).